Consider the following 1477-residue polypeptide: MWSLPASEGESATAHFFLGAGDEGLGTRGLGMRPEESDSELLEDEEDEVPPEPQIIVGICAMTKKSKSKPMTQILERLCRFDYLTVIILGEDVILNEPVENWPSCHCLISFHSKGFPLDKAVAYSKLRNPFLINDLAMQYYIQDRREVYRILQEEGIDLPRYAVLNRDPARPEECNLIEGEDQVEVNGAVFPKPFVEKPVSAEDHNVYIYYPSSAGGGSQRLFRKIGSRSSVYSPESSVRKTGSYIYEEFMPTDGTDVKVYTVGPDYAHAEARKSPALDGKVERDSEGKEIRYPVMLTAMEKLVARKVCVAFKQTVCGFDLLRANGHSFVCDVNGFSFVKNSMKYYDDCAKILGNTIMRELAPQFQIPWSIPMEAEDIPIVPTTSGTMMELRCVIAIIRHGDRTPKQKMKMEVTHPRFFSLFEKHGGYKTGKLKLKRPEQLQEVLDITRLLLAELEKEPGGEIEEKTGKLEQLKSVLEMYGHFSGINRKVQLTYYPHGVKASNEGQDTQREALAPSLLLVLKWGGELTPAGRVQAEELGRAFRCMYPGGQGDYAGFPGCGLLRLHSTFRHDLKIYASDEGRVQMTAAAFAKGLLALEGELTPILVQMVKSANMNGLLDSDGDSLSSCQHRVKARLHHILQQDAPFGPEDYNQLAPTGSTSLLSSMAVIQNPVKVCDQVFDLIENLTHQIRERMQDPKSVDLQLYHSETLELMLQRWSKLERDFRQKSGRYDISKIPDIYDCVKYDVQHNGSLGLQGTAELLRLSKALADVVIPQEYGISREEKLEIAVGFCLPLLRKILLDLQRTHEDESVNKLHPLYSRGVLSPGRHVRTRLYFTSESHVHSLLSVFRYGGLLDETKDTQWQRALAYLSAISELNYMTQIVIMLYEDNTRDPLSEERFHVELHFSPGVKGVEEEGSAPTGCGFRPASSENEERKADQGSVEDLCPGKASDEPDRALQTSPLPSEGPGLPKRSPLIRNRKAGSMEVLSETSSSRPGGHRLFSSSRPPTEMKQSGLGSQCTGLFSTTVLGGSSSAPNLQDYARSQGKKLPPASLKHRDELLFVPAVKRFSVSFAKHPTNGFEGCSMVPTIYPLETLHNALSLRQVSEFLSRVCQRHTEAQAQASAALFDSMHSNQASDSPFSPPRTLHSPTLQLQQRSEKPPWYSSGPSSTVSSAGPSSPTAVDGNCPFGFSDQPSVSSHVTEEYQGLGLLQEAPGSGAQEPPLEGQQEPFEQNQSPQEPPVETKKPCQEVAEEVSQPCQDIPEEVNQPCQQVSDICQPCEENHDDVDQTCQEVPQISQPCEDASQLYQKVSKEVCELCQNSEEVNQPCQGVPVEIGRLVHGFPVGVGGLAQEVLGEVGRPTQEIPEELSQSCQEFSVDIGRLAQEASAINLLSPDTPEVDNPPLEFPGEGALQAQEVSEWVKQQQSYVVPELIDQLSREEVPQVQCPPSNANPQSQSLAPDQNAPLPPATCDSSFSH.

The tract at residues 27–47 (TRGLGMRPEESDSELLEDEED) is disordered. The segment covering 37–47 (SDSELLEDEED) has biased composition (acidic residues). A substrate-binding site is contributed by 64 to 65 (KK). ATP-binding positions include arginine 145, lysine 198, histidine 205, arginine 224, 248-251 (EEFM), and 257-259 (DVK). 224–225 (RK) provides a ligand contact to substrate. The substrate site is built by lysine 259 and arginine 273. Residues serine 275, aspartate 320, and 332–334 (DVN) contribute to the ATP site. A substrate-binding site is contributed by 337–340 (SFVK). Positions 382–453 (PTTSGTMMEL…VLDITRLLLA (72 aa)) are polyphosphoinositide-binding domain. The segment at 910-1016 (KGVEEEGSAP…PTEMKQSGLG (107 aa)) is disordered. Serine 940 and serine 983 each carry phosphoserine. Positions 1001–1016 (FSSSRPPTEMKQSGLG) are enriched in polar residues. Phosphoserine occurs at positions 1033, 1069, 1141, and 1148. 2 disordered regions span residues 1131 to 1248 (HSNQ…KPCQ) and 1438 to 1477 (REEV…SFSH). The span at 1164-1182 (SSGPSSTVSSAGPSSPTAV) shows a compositional bias: low complexity. Residues 1446–1460 (CPPSNANPQSQSLAP) show a composition bias toward polar residues.

This sequence belongs to the histidine acid phosphatase family. VIP1 subfamily.

The protein localises to the cytoplasm. The protein resides in the cytosol. Its subcellular location is the cell membrane. It carries out the reaction 1D-myo-inositol hexakisphosphate + ATP = 1-diphospho-1D-myo-inositol 2,3,4,5,6-pentakisphosphate + ADP. It catalyses the reaction 5-diphospho-1D-myo-inositol 1,2,3,4,6-pentakisphosphate + ATP + H(+) = 1,5-bis(diphospho)-1D-myo-inositol 2,3,4,6-tetrakisphosphate + ADP. Functionally, bifunctional inositol kinase that acts in concert with the IP6K kinases IP6K1, IP6K2 and IP6K3 to synthesize the diphosphate group-containing inositol pyrophosphates diphosphoinositol pentakisphosphate, PP-InsP5, and bis-diphosphoinositol tetrakisphosphate, (PP)2-InsP4. PP-InsP5 and (PP)2-InsP4, also respectively called InsP7 and InsP8, regulate a variety of cellular processes, including apoptosis, vesicle trafficking, cytoskeletal dynamics, exocytosis, insulin signaling and neutrophil activation. Phosphorylates inositol hexakisphosphate (InsP6) at position 1 to produce PP-InsP5 which is in turn phosphorylated by IP6Ks to produce (PP)2-InsP4. Alternatively, phosphorylates PP-InsP5 at position 1, produced by IP6Ks from InsP6, to produce (PP)2-InsP4. Activated when cells are exposed to hyperosmotic stress. This chain is Inositol hexakisphosphate and diphosphoinositol-pentakisphosphate kinase 1, found in Bos taurus (Bovine).